Reading from the N-terminus, the 519-residue chain is Sodium-dependent dicarboxylate transporter SdcS (519 aa).

14 helical membrane-spanning segments follow: residues 29 to 49 (VGQL…LLLF), 59 to 79 (VFVL…AIPI), 103 to 123 (AQYG…AIAM), 136 to 156 (IINT…IATG), 159 to 179 (SMFV…LAII), 201 to 221 (ALVL…LIGT), 241 to 261 (FAKW…LVWI), 297 to 317 (KVVL…EFLL), 322 to 342 (FTSE…LFLI), 362 to 382 (LPWG…GISE), 395 to 415 (LIEG…VLFL), 428 to 448 (ILPI…LLMV), 451 to 471 (AMAA…AIVF), and 490 to 510 (LLSI…VLGI).

Belongs to the SLC13A/DASS transporter (TC 2.A.47) family. NADC subfamily.

The protein localises to the cell membrane. Mediates the transport of dicarboxylates across the cytoplasmic membrane via a Na(+)-electrochemical gradient. This chain is Sodium-dependent dicarboxylate transporter SdcS (sdcS), found in Staphylococcus saprophyticus subsp. saprophyticus (strain ATCC 15305 / DSM 20229 / NCIMB 8711 / NCTC 7292 / S-41).